The following is a 266-amino-acid chain: Glucosamine-6-phosphate deaminase (266 aa).

Catalysis depends on aspartate 72, which acts as the Proton acceptor; for enolization step. Aspartate 141 functions as the For ring-opening step in the catalytic mechanism. Residue histidine 143 is the Proton acceptor; for ring-opening step of the active site. Residue glutamate 148 is the For ring-opening step of the active site.

This sequence belongs to the glucosamine/galactosamine-6-phosphate isomerase family. NagB subfamily. As to quaternary structure, homohexamer.

It catalyses the reaction alpha-D-glucosamine 6-phosphate + H2O = beta-D-fructose 6-phosphate + NH4(+). Its pathway is amino-sugar metabolism; N-acetylneuraminate degradation; D-fructose 6-phosphate from N-acetylneuraminate: step 5/5. Allosterically activated by N-acetylglucosamine 6-phosphate (GlcNAc6P). In terms of biological role, catalyzes the reversible isomerization-deamination of glucosamine 6-phosphate (GlcN6P) to form fructose 6-phosphate (Fru6P) and ammonium ion. This Pectobacterium carotovorum subsp. carotovorum (strain PC1) protein is Glucosamine-6-phosphate deaminase.